The following is a 257-amino-acid chain: 5'-nucleotidase SurE (257 aa).

A divalent metal cation is bound by residues Asp9, Asp10, Ser40, and Asn92.

This sequence belongs to the SurE nucleotidase family. It depends on a divalent metal cation as a cofactor.

It is found in the cytoplasm. The enzyme catalyses a ribonucleoside 5'-phosphate + H2O = a ribonucleoside + phosphate. Nucleotidase that shows phosphatase activity on nucleoside 5'-monophosphates. The sequence is that of 5'-nucleotidase SurE from Alkalilimnicola ehrlichii (strain ATCC BAA-1101 / DSM 17681 / MLHE-1).